The following is an 820-amino-acid chain: Chitinase A (820 aa).

Positions 1-21 (MKLNKITSYIGFALLSGGALA) are cleaved as a signal peptide. Positions 158–588 (RVTGAYFVEW…NAMYDGLTAG (431 aa)) constitute a GH18 domain. Glutamate 313 (proton donor) is an active-site residue.

It belongs to the glycosyl hydrolase 18 family. Chitinase class II subfamily.

The enzyme catalyses Random endo-hydrolysis of N-acetyl-beta-D-glucosaminide (1-&gt;4)-beta-linkages in chitin and chitodextrins.. Stimulated by magnesium ions; inhibited by N-bromosuccinimide and 2-hydroxy-5-nitrobenzyl bromide. The protein is Chitinase A (chiA) of Pseudoalteromonas piscicida.